A 121-amino-acid polypeptide reads, in one-letter code: uncharacterized protein (121 aa).

This is an uncharacterized protein from Escherichia coli (strain K12).